The chain runs to 176 residues: NAD(P)H-quinone oxidoreductase subunit 6, chloroplastic (176 aa).

5 consecutive transmembrane segments (helical) span residues 10-30 (ILMLFGGFVLLLGGLGVVLLT), 33-53 (IYSAFSLGLVLVCISLFYFLL), 60-80 (VAQLLIYVGAINVLIIFAVMF), 95-115 (IGDGFTSIVCITIVFSLMTTI), and 152-172 (FYLPFELISIILLVSLIGAIT).

Belongs to the complex I subunit 6 family. In terms of assembly, NDH is composed of at least 16 different subunits, 5 of which are encoded in the nucleus.

It is found in the plastid. The protein resides in the chloroplast thylakoid membrane. The catalysed reaction is a plastoquinone + NADH + (n+1) H(+)(in) = a plastoquinol + NAD(+) + n H(+)(out). The enzyme catalyses a plastoquinone + NADPH + (n+1) H(+)(in) = a plastoquinol + NADP(+) + n H(+)(out). In terms of biological role, NDH shuttles electrons from NAD(P)H:plastoquinone, via FMN and iron-sulfur (Fe-S) centers, to quinones in the photosynthetic chain and possibly in a chloroplast respiratory chain. The immediate electron acceptor for the enzyme in this species is believed to be plastoquinone. Couples the redox reaction to proton translocation, and thus conserves the redox energy in a proton gradient. The sequence is that of NAD(P)H-quinone oxidoreductase subunit 6, chloroplastic (ndhG) from Lolium perenne (Perennial ryegrass).